The primary structure comprises 39 residues: Omega-theraphotoxin-Asp1g (39 aa).

Cystine bridges form between Cys-4–Cys-25, Cys-8–Cys-31, and Cys-17–Cys-36.

The protein belongs to the neurotoxin 12 (Hwtx-2) family. 06 (TXP1) subfamily. As to expression, expressed by the venom gland.

It is found in the secreted. In terms of biological role, inhibits voltage-gated calcium channels (Cav) in rat cerebellar granule cells. Has insecticidal activity. The chain is Omega-theraphotoxin-Asp1g from Aphonopelma sp. (American tarantula).